A 304-amino-acid polypeptide reads, in one-letter code: tRNA dimethylallyltransferase (304 aa).

8-15 (GPTASGKS) contacts ATP. 10–15 (TASGKS) contacts substrate. The segment at 33–36 (DSRQ) is interaction with substrate tRNA.

It belongs to the IPP transferase family. Monomer. Requires Mg(2+) as cofactor.

The enzyme catalyses adenosine(37) in tRNA + dimethylallyl diphosphate = N(6)-dimethylallyladenosine(37) in tRNA + diphosphate. Functionally, catalyzes the transfer of a dimethylallyl group onto the adenine at position 37 in tRNAs that read codons beginning with uridine, leading to the formation of N6-(dimethylallyl)adenosine (i(6)A). The polypeptide is tRNA dimethylallyltransferase (Chlorobium luteolum (strain DSM 273 / BCRC 81028 / 2530) (Pelodictyon luteolum)).